A 1045-amino-acid polypeptide reads, in one-letter code: Probable beta-glucosidase E (1045 aa).

Residues 1–74 (MAPPDSTHGG…SGSYQLRPVD (74 aa)) are disordered. Topologically, residues 1–163 (MAPPDSTHGG…PVKYARIWWR (163 aa)) are cytoplasmic. The span at 11–20 (SFRDHLKTND) shows a compositional bias: basic and acidic residues. The helical; Signal-anchor for type II membrane protein transmembrane segment at 164–184 (TLLAVIVTLAVVVWGFLSFAV) threads the bilayer. The Extracellular segment spans residues 185–1045 (SHREEPKVWP…SRDLPLMGEY (861 aa)). N-linked (GlcNAc...) asparagine glycans are attached at residues asparagine 226, asparagine 234, and asparagine 402. The active site involves aspartate 430. Asparagine 473, asparagine 512, asparagine 577, asparagine 893, asparagine 902, and asparagine 988 each carry an N-linked (GlcNAc...) asparagine glycan.

This sequence belongs to the glycosyl hydrolase 3 family.

The protein resides in the cell membrane. It carries out the reaction Hydrolysis of terminal, non-reducing beta-D-glucosyl residues with release of beta-D-glucose.. Its pathway is glycan metabolism; cellulose degradation. Functionally, beta-glucosidases are one of a number of cellulolytic enzymes involved in the degradation of cellulosic biomass. Catalyzes the last step releasing glucose from the inhibitory cellobiose. The polypeptide is Probable beta-glucosidase E (bglE) (Neosartorya fischeri (strain ATCC 1020 / DSM 3700 / CBS 544.65 / FGSC A1164 / JCM 1740 / NRRL 181 / WB 181) (Aspergillus fischerianus)).